The sequence spans 761 residues: Probable ubiquitin carboxyl-terminal hydrolase creB (761 aa).

The tract at residues Met1–Pro45 is disordered. Positions Leu36 to Pro45 are enriched in basic and acidic residues. Positions Tyr55 to Thr468 constitute a USP domain. Residue Cys64 is the Nucleophile of the active site. Disordered regions lie at residues Glu113–Glu146 and Pro242–Asn269. The span at Ser256–Asn269 shows a compositional bias: polar residues. His419 (proton acceptor) is an active-site residue. Residues Leu496 to Ser761 are disordered. Pro residues predominate over residues Pro555 to Pro566. Positions Lys577–Leu640 form a coiled coil. The segment covering Ala580 to Gln649 has biased composition (basic and acidic residues). Residues Arg655–Arg666 are compositionally biased toward basic residues. Residues Ser692–Pro710 are compositionally biased toward low complexity. Residues His712–Gly722 are compositionally biased toward pro residues. Positions Thr725–Gly743 are enriched in basic and acidic residues. Basic residues predominate over residues His744–Ser761.

The protein belongs to the peptidase C19 family. In terms of assembly, interacts with creA, creC and qutD.

It carries out the reaction Thiol-dependent hydrolysis of ester, thioester, amide, peptide and isopeptide bonds formed by the C-terminal Gly of ubiquitin (a 76-residue protein attached to proteins as an intracellular targeting signal).. Its function is as follows. Ubiquitin thioesterase component of the regulatory network controlling carbon source utilization through ubiquitination and deubiquitination involving creA, creB, creC, creD and acrB. Deubiquitinates the creA catabolic repressor and the quinate permease qutD. Also plays a role in response to carbon starvation and the control of extracellular proteases activity. This is Probable ubiquitin carboxyl-terminal hydrolase creB (creB) from Neosartorya fischeri (strain ATCC 1020 / DSM 3700 / CBS 544.65 / FGSC A1164 / JCM 1740 / NRRL 181 / WB 181) (Aspergillus fischerianus).